Consider the following 294-residue polypeptide: Ribosomal protein L11 methyltransferase (294 aa).

The S-adenosyl-L-methionine site is built by threonine 145, glycine 166, aspartate 188, and asparagine 230.

It belongs to the methyltransferase superfamily. PrmA family.

The protein localises to the cytoplasm. The catalysed reaction is L-lysyl-[protein] + 3 S-adenosyl-L-methionine = N(6),N(6),N(6)-trimethyl-L-lysyl-[protein] + 3 S-adenosyl-L-homocysteine + 3 H(+). Methylates ribosomal protein L11. In Glaesserella parasuis serovar 5 (strain SH0165) (Haemophilus parasuis), this protein is Ribosomal protein L11 methyltransferase.